Consider the following 364-residue polypeptide: Isoflavone 4'-O-methyltransferase (364 aa).

S-adenosyl-L-methionine-binding positions include 206 to 209 (VGGG), aspartate 230, 230 to 231 (DQ), 250 to 251 (DM), and lysine 264. Residue histidine 268 is the Proton acceptor of the active site.

The protein belongs to the class I-like SAM-binding methyltransferase superfamily. Cation-independent O-methyltransferase family. COMT subfamily. Homodimer.

It catalyses the reaction a 4'-hydroxyisoflavone + S-adenosyl-L-methionine = a 4'-methoxyisoflavone + S-adenosyl-L-homocysteine + H(+). The catalysed reaction is (2R,3S)-2,4',7-trihydroxyisoflavanone + S-adenosyl-L-methionine = (2R,3S)-2,7-dihydroxy-4'-methoxyisoflavanone + S-adenosyl-L-homocysteine + H(+). 2-hydroxyisoflavanone 4'-O-methyltransferase involved in the biosynthesis of the phytoalexin medicarpin. Has also an in vitro (+)-6a-hydroxymaackiain-3-0-methyltransferase activity, converting the pterocarpan 6a-hydroxymaackiain into pisatin. No activity with di- or trihydroxylated isoflavones, including daidzein and genistein, or with (-)-medicarpin and maackiain. The dual activity for either 3- or 4'-O-methylation depends upon substrate availability. The sequence is that of Isoflavone 4'-O-methyltransferase (HI4'OMT) from Medicago truncatula (Barrel medic).